Here is a 122-residue protein sequence, read N- to C-terminus: MPTLQQLIRFGRQQVMVRPKSAALKRCPQRRGVCVKVYTTTPKKPNSALRKVARVKLTSGYEVTAYIPGIGHNLQEHSVVLVRGGRVKDLPGVRYHIIRGALDTAGVKNRVRSRSKYGVKKA.

This sequence belongs to the universal ribosomal protein uS12 family. In terms of assembly, part of the 30S ribosomal subunit.

It localises to the plastid. The protein resides in the chloroplast. Its function is as follows. With S4 and S5 plays an important role in translational accuracy. Located at the interface of the 30S and 50S subunits. The polypeptide is Small ribosomal subunit protein uS12c (rps12) (Cyanidioschyzon merolae (strain NIES-3377 / 10D) (Unicellular red alga)).